We begin with the raw amino-acid sequence, 453 residues long: MVAIAILAAGKGTRMKSGLPKVLHSLGGRSLLGWVLNSAAEVEPERQIVIVGYRSEMVRESLQAVPGLEFVEQAEQLGTGHAVQQVIPLLQGYEDSLLVLNGDVPLLRPQTLKLLLDTHRRHNNAATLLTAHVPDPKGYGRVICDGNNILKQIIEDRDCTPAQKQNHRVNAGIYCFRWPDLAEVLPKLQANNNQQEYYLTDVVNDLSPVMAVDVEDYEEILGINDRKQLALAYQILQNRIKDQAMAAGVTLIDPDSITIDDTVKLEVDVVIEPQTHLRGHTTIGTGSRIGPGSLIENSQIGANVTISYSVVSDSVIQAGTRVGPYAHLRGHVEVGSQCRIGNFVELKNTKLGDRTNAAHLAYLGDTTTGTGVNIGAGTITANYDGVKKHRTQIGDRTKTGSNSVLVAPLILGNDVTVAAGSTITENVPDDCLAVARSRQVVKPGWRLKQPDPT.

The segment at 1-226 is pyrophosphorylase; the sequence is MVAIAILAAG…YEEILGINDR (226 aa). UDP-N-acetyl-alpha-D-glucosamine contacts are provided by residues 7–10, Lys-21, Gln-73, and 78–79; these read LAAG and GT. Asp-103 contacts Mg(2+). UDP-N-acetyl-alpha-D-glucosamine contacts are provided by Gly-140, Glu-155, Asn-170, and Asn-224. Asn-224 is a Mg(2+) binding site. A linker region spans residues 227–247; that stretch reads KQLALAYQILQNRIKDQAMAA. Residues 248 to 453 form an N-acetyltransferase region; it reads GVTLIDPDSI…GWRLKQPDPT (206 aa). Arg-329 and Lys-347 together coordinate UDP-N-acetyl-alpha-D-glucosamine. His-359 serves as the catalytic Proton acceptor. Residues Tyr-362 and Asn-373 each coordinate UDP-N-acetyl-alpha-D-glucosamine. Acetyl-CoA-binding positions include Ala-376, 382-383, Ser-401, Ala-419, and Arg-436; that span reads NY.

In the N-terminal section; belongs to the N-acetylglucosamine-1-phosphate uridyltransferase family. This sequence in the C-terminal section; belongs to the transferase hexapeptide repeat family. As to quaternary structure, homotrimer. Mg(2+) is required as a cofactor.

It is found in the cytoplasm. The catalysed reaction is alpha-D-glucosamine 1-phosphate + acetyl-CoA = N-acetyl-alpha-D-glucosamine 1-phosphate + CoA + H(+). The enzyme catalyses N-acetyl-alpha-D-glucosamine 1-phosphate + UTP + H(+) = UDP-N-acetyl-alpha-D-glucosamine + diphosphate. The protein operates within nucleotide-sugar biosynthesis; UDP-N-acetyl-alpha-D-glucosamine biosynthesis; N-acetyl-alpha-D-glucosamine 1-phosphate from alpha-D-glucosamine 6-phosphate (route II): step 2/2. It participates in nucleotide-sugar biosynthesis; UDP-N-acetyl-alpha-D-glucosamine biosynthesis; UDP-N-acetyl-alpha-D-glucosamine from N-acetyl-alpha-D-glucosamine 1-phosphate: step 1/1. Its pathway is bacterial outer membrane biogenesis; LPS lipid A biosynthesis. Functionally, catalyzes the last two sequential reactions in the de novo biosynthetic pathway for UDP-N-acetylglucosamine (UDP-GlcNAc). The C-terminal domain catalyzes the transfer of acetyl group from acetyl coenzyme A to glucosamine-1-phosphate (GlcN-1-P) to produce N-acetylglucosamine-1-phosphate (GlcNAc-1-P), which is converted into UDP-GlcNAc by the transfer of uridine 5-monophosphate (from uridine 5-triphosphate), a reaction catalyzed by the N-terminal domain. This chain is Bifunctional protein GlmU, found in Cyanothece sp. (strain PCC 7425 / ATCC 29141).